The chain runs to 270 residues: ATP synthase subunit a (270 aa).

The next 5 membrane-spanning stretches (helical) occupy residues 38 to 58 (VHID…GIFY), 98 to 118 (IAPL…MDLV), 143 to 163 (DVNI…YYSI), 208 to 228 (LFGN…MLPW), and 239 to 259 (AIFH…LTIV).

It belongs to the ATPase A chain family. F-type ATPases have 2 components, CF(1) - the catalytic core - and CF(0) - the membrane proton channel. CF(1) has five subunits: alpha(3), beta(3), gamma(1), delta(1), epsilon(1). CF(0) has three main subunits: a(1), b(2) and c(9-12). The alpha and beta chains form an alternating ring which encloses part of the gamma chain. CF(1) is attached to CF(0) by a central stalk formed by the gamma and epsilon chains, while a peripheral stalk is formed by the delta and b chains.

It is found in the cell inner membrane. In terms of biological role, key component of the proton channel; it plays a direct role in the translocation of protons across the membrane. The protein is ATP synthase subunit a of Vibrio alginolyticus.